The sequence spans 147 residues: UPF0306 protein YhbP (147 aa).

It belongs to the UPF0306 family.

The protein is UPF0306 protein YhbP of Escherichia coli O7:K1 (strain IAI39 / ExPEC).